A 465-amino-acid polypeptide reads, in one-letter code: 23S rRNA (uracil(1939)-C(5))-methyltransferase RlmD (465 aa).

Residues 1–22 (MSEAVPTSARKSRNAPVAPGPA) form a disordered region. Residues 16-80 (PVAPGPAPVL…PSYEQATVVD (65 aa)) enclose the TRAM domain. 4 residues coordinate [4Fe-4S] cluster: cysteine 93, cysteine 99, cysteine 102, and cysteine 181. Positions 289, 318, 323, 339, 367, and 388 each coordinate S-adenosyl-L-methionine. Cysteine 421 (nucleophile) is an active-site residue.

Belongs to the class I-like SAM-binding methyltransferase superfamily. RNA M5U methyltransferase family. RlmD subfamily.

It catalyses the reaction uridine(1939) in 23S rRNA + S-adenosyl-L-methionine = 5-methyluridine(1939) in 23S rRNA + S-adenosyl-L-homocysteine + H(+). Functionally, catalyzes the formation of 5-methyl-uridine at position 1939 (m5U1939) in 23S rRNA. In Burkholderia lata (strain ATCC 17760 / DSM 23089 / LMG 22485 / NCIMB 9086 / R18194 / 383), this protein is 23S rRNA (uracil(1939)-C(5))-methyltransferase RlmD.